A 432-amino-acid chain; its full sequence is Interleukin-11 receptor subunit alpha-2 (432 aa).

The first 23 residues, Met-1–Ser-23, serve as a signal peptide directing secretion. The Extracellular segment spans residues Ser-24–Ala-372. The region spanning Pro-27–Gly-110 is the Ig-like C2-type domain. 3 disulfides stabilise this stretch: Cys-48–Cys-94, Cys-120–Cys-130, and Cys-170–Cys-180. 2 Fibronectin type-III domains span residues Pro-112–Asp-219 and Pro-220–Thr-317. The N-linked (GlcNAc...) asparagine glycan is linked to Asn-127. A disordered region spans residues Lys-151–Cys-170. Asn-194 carries an N-linked (GlcNAc...) asparagine glycan. The WSXWS motif motif lies at Trp-304–Ser-308. Residues Ser-373–Leu-393 traverse the membrane as a helical segment. Topologically, residues Arg-394 to Ser-432 are cytoplasmic.

This sequence belongs to the type I cytokine receptor family. Type 3 subfamily. On ligand binding, forms a multimer complex with IL6ST/gp130. As to expression, expression restricted to testis, lymph node and thymus. Highest level in testis.

The protein resides in the membrane. In terms of biological role, receptor for interleukin-11. The receptor systems for IL6, LIF, OSM, CNTF, IL11 and CT1 can utilize IL6ST for initiating signal transmission. The IL11/IL11RA/IL6ST complex may be involved in the control of proliferation and/or differentiation of skeletogenic progenitor or other mesenchymal cells. This is Interleukin-11 receptor subunit alpha-2 (Il11ra2) from Mus musculus (Mouse).